A 458-amino-acid chain; its full sequence is tRNA-2-methylthio-N(6)-dimethylallyladenosine synthase (458 aa).

Residues 15–134 enclose the MTTase N-terminal domain; that stretch reads KKVFIKTYGC…LPELLQQAQQ (120 aa). Cys24, Cys60, Cys97, Cys175, Cys179, and Cys182 together coordinate [4Fe-4S] cluster. The Radical SAM core domain occupies 161–393; sequence QKRGVSAFLT…QALLLDQQHR (233 aa). The TRAM domain occupies 396-457; the sequence is RSKIGQTTDV…SNSFVGEKAN (62 aa).

It belongs to the methylthiotransferase family. MiaB subfamily. Monomer. The cofactor is [4Fe-4S] cluster.

Its subcellular location is the cytoplasm. It catalyses the reaction N(6)-dimethylallyladenosine(37) in tRNA + (sulfur carrier)-SH + AH2 + 2 S-adenosyl-L-methionine = 2-methylsulfanyl-N(6)-dimethylallyladenosine(37) in tRNA + (sulfur carrier)-H + 5'-deoxyadenosine + L-methionine + A + S-adenosyl-L-homocysteine + 2 H(+). Functionally, catalyzes the methylthiolation of N6-(dimethylallyl)adenosine (i(6)A), leading to the formation of 2-methylthio-N6-(dimethylallyl)adenosine (ms(2)i(6)A) at position 37 in tRNAs that read codons beginning with uridine. In Bartonella bacilliformis (strain ATCC 35685 / KC583 / Herrer 020/F12,63), this protein is tRNA-2-methylthio-N(6)-dimethylallyladenosine synthase.